Consider the following 144-residue polypeptide: Large ribosomal subunit protein uL15 (144 aa).

The segment at 1–56 is disordered; the sequence is MELNNLKPAEGAKHAKRRVGRGIGSGLGKTAGRGHKGQKSRSGGFHKVGFEGGQMP. Positions 21 to 31 are enriched in gly residues; that stretch reads RGIGSGLGKTA.

Belongs to the universal ribosomal protein uL15 family. Part of the 50S ribosomal subunit.

Binds to the 23S rRNA. The polypeptide is Large ribosomal subunit protein uL15 (Burkholderia mallei (strain NCTC 10247)).